Reading from the N-terminus, the 932-residue chain is GPI ethanolamine phosphate transferase 1 (932 aa).

Residues 1–8 (MISLNKKL) are Cytoplasmic-facing. The chain crosses the membrane as a helical span at residues 9–29 (VLLVGVIFHVAFMWSIFDIYF). The Lumenal portion of the chain corresponds to 30–456 (VSPLIHGMKH…TYNWLFLRTL (427 aa)). N-linked (GlcNAc...) asparagine glycans are attached at residues Asn-138, Asn-202, and Asn-360. The helical transmembrane segment at 457-477 (VTIGFFGWIAVAFCSYLLAFV) threads the bilayer. The Cytoplasmic segment spans residues 478–486 (VQSDKPFTT). A helical membrane pass occupies residues 487 to 507 (SLPLKGVAYVALAILSGFFVF). The Lumenal segment spans residues 508–509 (QK). Residues 510–530 (SPLHYHLYAVFPVVFWEAVLQ) form a helical membrane-spanning segment. Residues 531–551 (RRTAVAEGISILARRSTSKAP) are Cytoplasmic-facing. Residues 552 to 572 (ALAAILDIGLSLVLLEAIVYG) traverse the membrane as a helical segment. Over 573–577 (YFHRE) the chain is Lumenal. A helical membrane pass occupies residues 578–598 (IFSVCFGLATLWPFVHNFTVA). The Cytoplasmic segment spans residues 599–603 (KREWP). Residues 604–624 (TTLAWVVMCAIMSSFTLLEVV) form a helical membrane-spanning segment. Residues 625–627 (KVE) are Lumenal-facing. The helical transmembrane segment at 628–648 (SIEQILLSGALMLVIGLVFTI) threads the bilayer. The Cytoplasmic segment spans residues 649–653 (HLQRK). Residues 654 to 674 (LALAASTVCVLFAQILLVVAT) traverse the membrane as a helical segment. Residues 675–696 (MYFTRESVESLTARNGLPLFSQ) lie on the Lumenal side of the membrane. A helical membrane pass occupies residues 697-717 (VGGWISLLLSLAVPFLHFLGS). The Cytoplasmic segment spans residues 718 to 737 (DAKDYRLRLLIIFLAFGPTF). The chain crosses the membrane as a helical span at residues 738–758 (VILTISWEGFFYVCFFAILVI). The Lumenal segment spans residues 759 to 786 (WIELETQMRDARVTPQTRADLTPGDFRM). Residues 787–807 (ALFTFFMSQIGFFGIGNIASI) form a helical membrane-spanning segment. The Cytoplasmic segment spans residues 808-828 (SSFSLDSVYRLIPVFDPFSMG). A helical membrane pass occupies residues 829-849 (ALLMFKILVPFAVLSACLGIL). At 850–859 (NLKLGVPPSA) the chain is on the lumenal side. A helical membrane pass occupies residues 860 to 880 (LFSMVLCVSDILTLNFFYLVV). At 881-900 (DEGSWLDIGTGISHYCIASG) the chain is on the cytoplasmic side. The helical transmembrane segment at 901–921 (LSLFMMVLEYLSGVLVAGVTI) threads the bilayer. The Lumenal segment spans residues 922 to 932 (APHVSKIKKDM).

This sequence belongs to the PIGG/PIGN/PIGO family. PIGN subfamily.

It localises to the endoplasmic reticulum membrane. It functions in the pathway glycolipid biosynthesis; glycosylphosphatidylinositol-anchor biosynthesis. Functionally, ethanolamine phosphate transferase involved in glycosylphosphatidylinositol-anchor biosynthesis. Transfers ethanolamine phosphate to the first alpha-1,4-linked mannose of the glycosylphosphatidylinositol precursor of GPI-anchor. This Yarrowia lipolytica (strain CLIB 122 / E 150) (Yeast) protein is GPI ethanolamine phosphate transferase 1 (MCD4).